Here is a 182-residue protein sequence, read N- to C-terminus: ATP synthase subunit delta, mitochondrial (182 aa).

Residues 1 to 17 (MFRTFGRRLVSCTLPLL) constitute a mitochondrion transit peptide.

This sequence belongs to the ATPase epsilon chain family. F-type ATPases have 2 components, F(1) - the catalytic core - and F(o) - the membrane proton channel. F(1) has five subunits: alpha(3), beta(3), gamma(1), delta(1), epsilon(1), plus the additional subunit P18 (Tb427.05.1710) that is not present in F(1)F(o) ATP synthase from metazoa. Subunit P18 (Tb927.5.1710) interacts with the alpha subunit with a 1:1 stoichiometry; the interaction is direct. Subunit gamma is part of the central stalk. F(o) has three main subunits: a, b and c. The trypanosomal ATPase complex contains additional subunits that are not present in the F(1)F(o) ATP synthase from metazoa.

The protein localises to the mitochondrion. Its subcellular location is the mitochondrion inner membrane. Its function is as follows. Mitochondrial membrane ATP synthase (F(1)F(o) ATP synthase) produces ATP from ADP in the presence of a proton gradient across the membrane which is generated by electron transport complexes of the respiratory chain. F-type ATPases consist of two structural domains, F(1) - containing the extramembraneous catalytic core, and F(o) - containing the membrane proton channel, linked together by a central stalk and a peripheral stalk. During catalysis, ATP synthesis in the catalytic domain of F(1) is coupled via a rotary mechanism of the central stalk subunits to proton translocation. Subunits alpha and beta form the catalytic core in F(1). Rotation of the central stalk against the surrounding alpha(3)beta(3) subunits leads to hydrolysis of ATP in three separate catalytic sites on the beta subunits. Contrary to the procyclic, insect form that requires F(1)F(o) ATP synthase for ATP synthesis, the bloodstream form relies on ATP hydrolysis by F(1)F(o) ATP synthase to maintain its mitochondrial membrane potential. In Trypanosoma brucei brucei, this protein is ATP synthase subunit delta, mitochondrial.